The primary structure comprises 314 residues: Galectin-12 (314 aa).

2 consecutive Galectin domains span residues 27–161 and 190–314; these read YGTT…VGFL and CSRA…CVHC.

Its subcellular location is the nucleus. Functionally, binds lactose. May participate in the apoptosis of adipocytes. In Mus musculus (Mouse), this protein is Galectin-12 (Lgals12).